The sequence spans 499 residues: ATP synthase subunit alpha, chloroplastic (499 aa).

170 to 177 lines the ATP pocket; it reads GDRQTGKT.

Belongs to the ATPase alpha/beta chains family. As to quaternary structure, F-type ATPases have 2 components, CF(1) - the catalytic core - and CF(0) - the membrane proton channel. CF(1) has five subunits: alpha(3), beta(3), gamma(1), delta(1), epsilon(1). CF(0) has four main subunits: a, b, b' and c.

Its subcellular location is the plastid. It is found in the chloroplast thylakoid membrane. The catalysed reaction is ATP + H2O + 4 H(+)(in) = ADP + phosphate + 5 H(+)(out). Its function is as follows. Produces ATP from ADP in the presence of a proton gradient across the membrane. The alpha chain is a regulatory subunit. The polypeptide is ATP synthase subunit alpha, chloroplastic (Emiliania huxleyi (Coccolithophore)).